The sequence spans 514 residues: Transmembrane protein 151B (514 aa).

The interval 1 to 40 (MSAEGEPAEAVAETPANSPGEEAAAAAATTDVDVREEQRP) is disordered. 3 consecutive transmembrane segments (helical) span residues 57 to 77 (CLLL…CQVT), 104 to 124 (YVYI…VECW), and 286 to 306 (PWYV…SWPL).

The protein belongs to the TMEM151 family.

Its subcellular location is the membrane. In Xenopus tropicalis (Western clawed frog), this protein is Transmembrane protein 151B (tmem151b).